The chain runs to 521 residues: Glycogen synthase (521 aa).

Lys-18 is a binding site for ADP-alpha-D-glucose.

It belongs to the glycosyltransferase 1 family. Bacterial/plant glycogen synthase subfamily.

It catalyses the reaction [(1-&gt;4)-alpha-D-glucosyl](n) + ADP-alpha-D-glucose = [(1-&gt;4)-alpha-D-glucosyl](n+1) + ADP + H(+). Its pathway is glycan biosynthesis; glycogen biosynthesis. Its function is as follows. Synthesizes alpha-1,4-glucan chains using ADP-glucose. The chain is Glycogen synthase from Bordetella petrii (strain ATCC BAA-461 / DSM 12804 / CCUG 43448).